A 31-amino-acid chain; its full sequence is Diuretic hormone class 2 (31 aa).

Residue Pro-31 is modified to Proline amide.

Belongs to the diuretic hormone class 2 family.

The protein localises to the secreted. Its function is as follows. Regulation of fluid secretion. Stimulates primary urine secretion by Malpighian tubules and causes a dose-dependent stimulation of cAMP levels in the tubules. Has a nonselective effect on Na(+)/K(+) ion transport. In vitro, primarily elevates intracellular Ca(2+). The sequence is that of Diuretic hormone class 2 from Apis mellifera (Honeybee).